The following is an 877-amino-acid chain: Alanine--tRNA ligase (877 aa).

Zn(2+) is bound by residues His-564, His-568, Cys-666, and His-670.

It belongs to the class-II aminoacyl-tRNA synthetase family. The cofactor is Zn(2+).

Its subcellular location is the cytoplasm. It carries out the reaction tRNA(Ala) + L-alanine + ATP = L-alanyl-tRNA(Ala) + AMP + diphosphate. Catalyzes the attachment of alanine to tRNA(Ala) in a two-step reaction: alanine is first activated by ATP to form Ala-AMP and then transferred to the acceptor end of tRNA(Ala). Also edits incorrectly charged Ser-tRNA(Ala) and Gly-tRNA(Ala) via its editing domain. This is Alanine--tRNA ligase from Pelotomaculum thermopropionicum (strain DSM 13744 / JCM 10971 / SI).